A 382-amino-acid chain; its full sequence is UDP-N-acetylglucosamine--N-acetylmuramyl-(pentapeptide) pyrophosphoryl-undecaprenol N-acetylglucosamine transferase (382 aa).

Residues 22–24 (TGG), Asn134, Arg186, Ser212, 285–290 (ALTVAE), and Gln311 contribute to the UDP-N-acetyl-alpha-D-glucosamine site.

The protein belongs to the glycosyltransferase 28 family. MurG subfamily.

It localises to the cell inner membrane. The enzyme catalyses di-trans,octa-cis-undecaprenyl diphospho-N-acetyl-alpha-D-muramoyl-L-alanyl-D-glutamyl-meso-2,6-diaminopimeloyl-D-alanyl-D-alanine + UDP-N-acetyl-alpha-D-glucosamine = di-trans,octa-cis-undecaprenyl diphospho-[N-acetyl-alpha-D-glucosaminyl-(1-&gt;4)]-N-acetyl-alpha-D-muramoyl-L-alanyl-D-glutamyl-meso-2,6-diaminopimeloyl-D-alanyl-D-alanine + UDP + H(+). It functions in the pathway cell wall biogenesis; peptidoglycan biosynthesis. In terms of biological role, cell wall formation. Catalyzes the transfer of a GlcNAc subunit on undecaprenyl-pyrophosphoryl-MurNAc-pentapeptide (lipid intermediate I) to form undecaprenyl-pyrophosphoryl-MurNAc-(pentapeptide)GlcNAc (lipid intermediate II). This is UDP-N-acetylglucosamine--N-acetylmuramyl-(pentapeptide) pyrophosphoryl-undecaprenol N-acetylglucosamine transferase from Pseudoalteromonas atlantica (strain T6c / ATCC BAA-1087).